The chain runs to 908 residues: Protein translocase subunit SecA (908 aa).

ATP contacts are provided by residues Q90, 108 to 112, and D503; that span reads GEGKT. Over residues 846–864 the composition is skewed to low complexity; the sequence is AAAAEAPVAPAPQPAAAAP. The segment at 846–884 is disordered; sequence AAAAEAPVAPAPQPAAAAPQPTPELVGAEAGEPDPAAWG. Residues C892, C894, C903, and H904 each coordinate Zn(2+).

This sequence belongs to the SecA family. In terms of assembly, monomer and homodimer. Part of the essential Sec protein translocation apparatus which comprises SecA, SecYEG and auxiliary proteins SecDF-YajC and YidC. It depends on Zn(2+) as a cofactor.

The protein localises to the cell inner membrane. It localises to the cytoplasm. It catalyses the reaction ATP + H2O + cellular proteinSide 1 = ADP + phosphate + cellular proteinSide 2.. Its function is as follows. Part of the Sec protein translocase complex. Interacts with the SecYEG preprotein conducting channel. Has a central role in coupling the hydrolysis of ATP to the transfer of proteins into and across the cell membrane, serving both as a receptor for the preprotein-SecB complex and as an ATP-driven molecular motor driving the stepwise translocation of polypeptide chains across the membrane. The sequence is that of Protein translocase subunit SecA from Cereibacter sphaeroides (strain KD131 / KCTC 12085) (Rhodobacter sphaeroides).